A 477-amino-acid chain; its full sequence is Bifunctional protein HldE (477 aa).

Residues 1 to 318 form a ribokinase region; that stretch reads MKVTLPEFER…ENAVRGRADT (318 aa). Lys-179 carries the post-translational modification N6-acetyllysine. 195–198 contacts ATP; sequence NLSE. Residue Asp-264 is part of the active site. Residues 344–477 form a cytidylyltransferase region; it reads MTNGVFDILH…IKKIQQDKKG (134 aa).

In the N-terminal section; belongs to the carbohydrate kinase PfkB family. This sequence in the C-terminal section; belongs to the cytidylyltransferase family. In terms of assembly, homodimer.

It carries out the reaction D-glycero-beta-D-manno-heptose 7-phosphate + ATP = D-glycero-beta-D-manno-heptose 1,7-bisphosphate + ADP + H(+). The enzyme catalyses D-glycero-beta-D-manno-heptose 1-phosphate + ATP + H(+) = ADP-D-glycero-beta-D-manno-heptose + diphosphate. Its pathway is nucleotide-sugar biosynthesis; ADP-L-glycero-beta-D-manno-heptose biosynthesis; ADP-L-glycero-beta-D-manno-heptose from D-glycero-beta-D-manno-heptose 7-phosphate: step 1/4. The protein operates within nucleotide-sugar biosynthesis; ADP-L-glycero-beta-D-manno-heptose biosynthesis; ADP-L-glycero-beta-D-manno-heptose from D-glycero-beta-D-manno-heptose 7-phosphate: step 3/4. It functions in the pathway bacterial outer membrane biogenesis; LPS core biosynthesis. Its function is as follows. Catalyzes the phosphorylation of D-glycero-D-manno-heptose 7-phosphate at the C-1 position to selectively form D-glycero-beta-D-manno-heptose-1,7-bisphosphate. Functionally, catalyzes the ADP transfer from ATP to D-glycero-beta-D-manno-heptose 1-phosphate, yielding ADP-D-glycero-beta-D-manno-heptose. The protein is Bifunctional protein HldE of Shigella flexneri.